An 893-amino-acid polypeptide reads, in one-letter code: Desmocollin-1 (893 aa).

The first 29 residues, 1-29 (MAVASAAPGSIFWKQLLFSLLVLILFCDA), serve as a signal peptide directing secretion. The propeptide occupies 30-132 (CQKISLQVPS…KDAVLRRTKR (103 aa)). Cadherin domains are found at residues 133 to 240 (RWAP…APYF), 241 to 352 (ENKL…APYF), 353 to 470 (TETS…GPEC), 471 to 574 (QPPV…DHPP), and 575 to 682 (QIKQ…LSRE). Residues 133-692 (RWAPIPCSLM…AALANVFLGK (560 aa)) are Extracellular-facing. A glycan (N-linked (GlcNAc...) asparagine) is linked at Asn163. Thr383 carries the phosphothreonine modification. N-linked (GlcNAc...) asparagine glycosylation is found at Asn398 and Asn545. A helical transmembrane segment spans residues 693–715 (WAILAMVLGSVLLLCILFTCFCV). At 716–893 (TVKKTVKKCF…RTLAKTCVKK (178 aa)) the chain is on the cytoplasmic side.

In terms of assembly, binds to JUP/plakoglobin. In terms of processing, isoform 1A is phosphorylated on a serine but isoform 1B is not. In terms of tissue distribution, epidermis and weakly in tongue papillae.

The protein resides in the cell membrane. The protein localises to the cell junction. It localises to the desmosome. In terms of biological role, a component of desmosome cell-cell junctions which are required for positive regulation of cellular adhesion. Required for desmosome adhesion strength between the granular layers of the epidermis, as a result moderates epidermal proliferation and differentiation. Is therefore required to maintain postnatal epidermal barrier function and normal hair follicle morphology into adulthood. The protein is Desmocollin-1 (DSC1) of Bos taurus (Bovine).